The primary structure comprises 256 residues: Adenylate kinase (256 aa).

45-50 (GAGKGT) provides a ligand contact to ATP. An NMP region spans residues 67–96 (ATGDLLRQQVAMGTDLGKQAKKIMDQGALV). AMP is bound by residues T68, R73, 94–96 (ALV), 123–126 (GFPR), and Q130. The interval 164–201 (GRLIHPGSGRSYHKIFSPPKQPMKDDITGEPLVQRSDD) is LID. ATP contacts are provided by residues R165 and 174-175 (SY). Residues R198 and R209 each coordinate AMP. Q237 contributes to the ATP binding site.

Belongs to the adenylate kinase family. AK2 subfamily. As to quaternary structure, monomer.

The protein localises to the cytoplasm. The protein resides in the cytosol. Its subcellular location is the mitochondrion intermembrane space. The catalysed reaction is AMP + ATP = 2 ADP. Functionally, catalyzes the reversible transfer of the terminal phosphate group between ATP and AMP. Plays an important role in cellular energy homeostasis and in adenine nucleotide metabolism. Adenylate kinase activity is critical for regulation of the phosphate utilization and the AMP de novo biosynthesis pathways. The protein is Adenylate kinase of Malassezia globosa (strain ATCC MYA-4612 / CBS 7966) (Dandruff-associated fungus).